The chain runs to 360 residues: Epoxyqueuosine reductase (360 aa).

The Proton donor role is filled by Asp-142. The region spanning 187–216 (APTEPVTAHCGSCQACMDVCPTQAIVAPHR) is the 4Fe-4S ferredoxin-type domain. Positions 196, 199, 202, 206, 222, 249, 252, and 256 each coordinate [4Fe-4S] cluster.

It belongs to the QueG family. Monomer. Cob(II)alamin is required as a cofactor. Requires [4Fe-4S] cluster as cofactor.

Its subcellular location is the cytoplasm. The enzyme catalyses epoxyqueuosine(34) in tRNA + AH2 = queuosine(34) in tRNA + A + H2O. It participates in tRNA modification; tRNA-queuosine biosynthesis. Its function is as follows. Catalyzes the conversion of epoxyqueuosine (oQ) to queuosine (Q), which is a hypermodified base found in the wobble positions of tRNA(Asp), tRNA(Asn), tRNA(His) and tRNA(Tyr). This is Epoxyqueuosine reductase from Alicycliphilus denitrificans (strain DSM 14773 / CIP 107495 / K601).